Reading from the N-terminus, the 346-residue chain is MTQEDSSRGLTSVGRVDFTNRFADRYNEWLGTTGDETKQVEDRVETDSGLPGHDIYGFENEIKSLQHFLLDQKSYKLFKSLVVVGEYGVGKTALCQQIFNDYDVRNAYAPRIWVSMHSNESKEGLDGKICVLKTILKGLGVEESMFESIHREVVEEVSNRQEAGEIDGETAKEKEISALLYALHLNLRWKKYLIVFDDVQEIDNWDEKLDAKLNEGEKWGKYLSDGFPKGSGGRVIYTTRDENLAKNLVVQKHEIHRLWPLSDSNSVWKIYEAMIQKREKESPRNDKKCIDELMNKSRGLPLAARLLAELDPMLFDDGKANQNGSKDGKTDSVDNPNSEESKTKPL.

Residues 38–116 (KQVEDRVETD…AYAPRIWVSM (79 aa)) enclose the NB-ARC domain. 85-92 (GEYGVGKT) provides a ligand contact to ATP. Residues 315-346 (FDDGKANQNGSKDGKTDSVDNPNSEESKTKPL) are disordered.

Its function is as follows. Possible disease resistance protein. This Arabidopsis thaliana (Mouse-ear cress) protein is Probable disease resistance protein At5g45440.